A 545-amino-acid chain; its full sequence is Protein BTN1 (545 aa).

Residues 23 to 49 (AHSSASDPRRTMVTNTSESPLASRQAT) form a disordered region. The segment covering 34-49 (MVTNTSESPLASRQAT) has biased composition (polar residues). 5 helical membrane passes run 66–86 (AFFL…TAAL), 97–117 (LVSF…PYFL), 127–147 (VWSC…FPAL), 205–225 (VGWF…AWWV), and 234–254 (GMAI…IILP). Positions 276-304 (TEDDAVERSSSDDQPTTANDDRQDSTIHI) are disordered. Transmembrane regions (helical) follow at residues 322-342 (MALL…VYAM), 408-428 (LLWL…TESL), and 440-460 (LVIV…VSVF).

The protein belongs to the battenin family.

Its subcellular location is the vacuole membrane. Involved in vacuolar transport and vacuole pH homeostasis. Also required for cytokinesis. The protein is Protein BTN1 (BTN1) of Mycosarcoma maydis (Corn smut fungus).